A 240-amino-acid chain; its full sequence is Dihydromonapterin reductase (240 aa).

Tyr152 (proton acceptor) is an active-site residue.

Belongs to the short-chain dehydrogenases/reductases (SDR) family. FolM subfamily.

The catalysed reaction is (6S)-5,6,7,8-tetrahydrofolate + NADP(+) = 7,8-dihydrofolate + NADPH + H(+). It carries out the reaction 7,8-dihydromonapterin + NADPH + H(+) = 5,6,7,8-tetrahydromonapterin + NADP(+). Functionally, catalyzes the reduction of dihydromonapterin to tetrahydromonapterin. Also has lower activity with dihydrofolate. This Escherichia coli O6:H1 (strain CFT073 / ATCC 700928 / UPEC) protein is Dihydromonapterin reductase (folM).